Here is a 206-residue protein sequence, read N- to C-terminus: Protein GrpE (206 aa).

The span at 1–18 shows a compositional bias: basic and acidic residues; that stretch reads MNNEDKKLQDEQLQKETV. Positions 1–21 are disordered; it reads MNNEDKKLQDEQLQKETVEAA.

Belongs to the GrpE family. Homodimer.

The protein resides in the cytoplasm. Functionally, participates actively in the response to hyperosmotic and heat shock by preventing the aggregation of stress-denatured proteins, in association with DnaK and GrpE. It is the nucleotide exchange factor for DnaK and may function as a thermosensor. Unfolded proteins bind initially to DnaJ; upon interaction with the DnaJ-bound protein, DnaK hydrolyzes its bound ATP, resulting in the formation of a stable complex. GrpE releases ADP from DnaK; ATP binding to DnaK triggers the release of the substrate protein, thus completing the reaction cycle. Several rounds of ATP-dependent interactions between DnaJ, DnaK and GrpE are required for fully efficient folding. The protein is Protein GrpE of Photobacterium profundum (strain SS9).